Reading from the N-terminus, the 223-residue chain is Small ribosomal subunit protein uS3 (223 aa).

One can recognise a KH type-2 domain in the interval 38 to 106 (IRKFLDEKLK…QVHINIVEIK (69 aa)).

The protein belongs to the universal ribosomal protein uS3 family. As to quaternary structure, part of the 30S ribosomal subunit. Forms a tight complex with proteins S10 and S14.

Functionally, binds the lower part of the 30S subunit head. Binds mRNA in the 70S ribosome, positioning it for translation. The protein is Small ribosomal subunit protein uS3 of Lactobacillus delbrueckii subsp. bulgaricus (strain ATCC 11842 / DSM 20081 / BCRC 10696 / JCM 1002 / NBRC 13953 / NCIMB 11778 / NCTC 12712 / WDCM 00102 / Lb 14).